A 90-amino-acid polypeptide reads, in one-letter code: Probable Fe(2+)-trafficking protein (90 aa).

It belongs to the Fe(2+)-trafficking protein family.

Its function is as follows. Could be a mediator in iron transactions between iron acquisition and iron-requiring processes, such as synthesis and/or repair of Fe-S clusters in biosynthetic enzymes. This is Probable Fe(2+)-trafficking protein from Polynucleobacter asymbioticus (strain DSM 18221 / CIP 109841 / QLW-P1DMWA-1) (Polynucleobacter necessarius subsp. asymbioticus).